The chain runs to 549 residues: Thermosome subunit alpha (549 aa).

The segment at 529-549 (EGRQGAECPPNGCMGGMDMRM) is disordered.

The protein belongs to the TCP-1 chaperonin family. As to quaternary structure, forms a Heterooligomeric complex of two stacked eight-membered rings.

In terms of biological role, molecular chaperone; binds unfolded polypeptides in vitro, and has a weak ATPase activity. The polypeptide is Thermosome subunit alpha (thsA) (Thermococcus sp. (strain KS-8)).